The following is a 154-amino-acid chain: Interleukin-7 (154 aa).

The N-terminal stretch at 1-25 (MFHVSFRYIFGIPPLILVLLPVTSS) is a signal peptide. 3 cysteine pairs are disulfide-bonded: Cys27/Cys145, Cys58/Cys133, and Cys71/Cys116. Asn94 and Asn115 each carry an N-linked (GlcNAc...) asparagine glycan.

The protein belongs to the IL-7/IL-9 family. In terms of assembly, interacts with IL7R and CSF2RG. Post-translationally, three disulfide bonds are present.

It is found in the secreted. In terms of biological role, hematopoietic cytokine that plays an essential role in the development, expansion, and survival of naive and memory T-cells and B-cells thereby regulating the number of mature lymphocytes and maintaining lymphoid homeostasis. Mechanistically, exerts its biological effects through a receptor composed of IL7RA subunit and the cytokine receptor common subunit gamma/CSF2RG. Binding to the receptor leads to activation of various kinases including JAK1 or JAK3 depending on the cell type and subsequently propagation of signals through activation of several downstream signaling pathways including the PI3K/Akt/mTOR or the JAK-STAT5. The protein is Interleukin-7 (Il7) of Mus musculus (Mouse).